A 136-amino-acid polypeptide reads, in one-letter code: Large ribosomal subunit protein uL14 (136 aa).

The protein belongs to the universal ribosomal protein uL14 family.

The polypeptide is Large ribosomal subunit protein uL14 (rpl23) (Dictyostelium discoideum (Social amoeba)).